The primary structure comprises 355 residues: S-adenosylmethionine:tRNA ribosyltransferase-isomerase (355 aa).

Belongs to the QueA family. As to quaternary structure, monomer.

It localises to the cytoplasm. The catalysed reaction is 7-aminomethyl-7-carbaguanosine(34) in tRNA + S-adenosyl-L-methionine = epoxyqueuosine(34) in tRNA + adenine + L-methionine + 2 H(+). Its pathway is tRNA modification; tRNA-queuosine biosynthesis. Functionally, transfers and isomerizes the ribose moiety from AdoMet to the 7-aminomethyl group of 7-deazaguanine (preQ1-tRNA) to give epoxyqueuosine (oQ-tRNA). This is S-adenosylmethionine:tRNA ribosyltransferase-isomerase from Burkholderia orbicola (strain MC0-3).